The following is a 508-amino-acid chain: BICD family-like cargo adapter 2 (508 aa).

Residues 1 to 22 (MSSPDGPSFPSGPLSGGASPSG) show a composition bias toward low complexity. 3 disordered regions span residues 1 to 27 (MSSP…EGFF), 132 to 152 (LGEQ…ALSE), and 300 to 351 (AHSL…TSLS). Coiled-coil stretches lie at residues 64-300 (AAEL…SELA) and 353-458 (AEIL…DMQV). Over residues 135–149 (QRSEQQDSGRERARA) the composition is skewed to basic and acidic residues. Residues 470 to 491 (KELSASASSSTPRRAAPRFSLR) are disordered. A compositionally biased stretch (low complexity) spans 473–489 (SASASSSTPRRAAPRFS).

It belongs to the BICDR family. Interacts with RAB13.

This is BICD family-like cargo adapter 2 (BICDL2) from Homo sapiens (Human).